Here is a 284-residue protein sequence, read N- to C-terminus: 2-dehydro-3-deoxyphosphooctonate aldolase (284 aa).

This sequence belongs to the KdsA family.

It localises to the cytoplasm. It carries out the reaction D-arabinose 5-phosphate + phosphoenolpyruvate + H2O = 3-deoxy-alpha-D-manno-2-octulosonate-8-phosphate + phosphate. The protein operates within carbohydrate biosynthesis; 3-deoxy-D-manno-octulosonate biosynthesis; 3-deoxy-D-manno-octulosonate from D-ribulose 5-phosphate: step 2/3. It participates in bacterial outer membrane biogenesis; lipopolysaccharide biosynthesis. In Mannheimia succiniciproducens (strain KCTC 0769BP / MBEL55E), this protein is 2-dehydro-3-deoxyphosphooctonate aldolase.